A 615-amino-acid chain; its full sequence is ATP-dependent zinc metalloprotease FtsH (615 aa).

At 1-8 (MAMNKDKP) the chain is on the cytoplasmic side. Residues 9–29 (WTLYLLAVGLAVLAAVQFGLF) form a helical membrane-spanning segment. Over 30-104 (SQPAVQAIPY…FSGVVEDNTV (75 aa)) the chain is Periplasmic. Residues 105-125 (ATVMGALMPLLMLLALWYFLF) traverse the membrane as a helical segment. Topologically, residues 126 to 615 (HGLGQKQGLG…ATYVLVDATK (490 aa)) are cytoplasmic. Position 198 to 205 (198 to 205 (GPPGTGKT)) interacts with ATP. H420 is a Zn(2+) binding site. E421 is an active-site residue. Positions 424 and 497 each coordinate Zn(2+).

It in the central section; belongs to the AAA ATPase family. In the C-terminal section; belongs to the peptidase M41 family. Homohexamer. It depends on Zn(2+) as a cofactor.

It is found in the cell inner membrane. In terms of biological role, acts as a processive, ATP-dependent zinc metallopeptidase for both cytoplasmic and membrane proteins. Plays a role in the quality control of integral membrane proteins. In Pseudomonas putida (strain ATCC 700007 / DSM 6899 / JCM 31910 / BCRC 17059 / LMG 24140 / F1), this protein is ATP-dependent zinc metalloprotease FtsH.